The primary structure comprises 476 residues: Bifunctional protein HldE (476 aa).

A ribokinase region spans residues 1–318 (MAQYSAEFKQ…ENAIHARPET (318 aa)). 195-198 (NMSE) is a binding site for ATP. Aspartate 264 is an active-site residue. Positions 344-476 (MTNGCFDILH…VIEKIKLLKD (133 aa)) are cytidylyltransferase.

In the N-terminal section; belongs to the carbohydrate kinase PfkB family. The protein in the C-terminal section; belongs to the cytidylyltransferase family. As to quaternary structure, homodimer.

It catalyses the reaction D-glycero-beta-D-manno-heptose 7-phosphate + ATP = D-glycero-beta-D-manno-heptose 1,7-bisphosphate + ADP + H(+). It carries out the reaction D-glycero-beta-D-manno-heptose 1-phosphate + ATP + H(+) = ADP-D-glycero-beta-D-manno-heptose + diphosphate. The protein operates within nucleotide-sugar biosynthesis; ADP-L-glycero-beta-D-manno-heptose biosynthesis; ADP-L-glycero-beta-D-manno-heptose from D-glycero-beta-D-manno-heptose 7-phosphate: step 1/4. It participates in nucleotide-sugar biosynthesis; ADP-L-glycero-beta-D-manno-heptose biosynthesis; ADP-L-glycero-beta-D-manno-heptose from D-glycero-beta-D-manno-heptose 7-phosphate: step 3/4. In terms of biological role, catalyzes the phosphorylation of D-glycero-D-manno-heptose 7-phosphate at the C-1 position to selectively form D-glycero-beta-D-manno-heptose-1,7-bisphosphate. Its function is as follows. Catalyzes the ADP transfer from ATP to D-glycero-beta-D-manno-heptose 1-phosphate, yielding ADP-D-glycero-beta-D-manno-heptose. In Haemophilus influenzae (strain 86-028NP), this protein is Bifunctional protein HldE.